The sequence spans 142 residues: Nucleoside diphosphate kinase (142 aa).

Lys-11, Phe-59, Arg-87, Thr-93, Arg-104, and Asn-114 together coordinate ATP. Catalysis depends on His-117, which acts as the Pros-phosphohistidine intermediate.

The protein belongs to the NDK family. As to quaternary structure, homotetramer. Requires Mg(2+) as cofactor.

Its subcellular location is the cytoplasm. It carries out the reaction a 2'-deoxyribonucleoside 5'-diphosphate + ATP = a 2'-deoxyribonucleoside 5'-triphosphate + ADP. The enzyme catalyses a ribonucleoside 5'-diphosphate + ATP = a ribonucleoside 5'-triphosphate + ADP. Its function is as follows. Major role in the synthesis of nucleoside triphosphates other than ATP. The ATP gamma phosphate is transferred to the NDP beta phosphate via a ping-pong mechanism, using a phosphorylated active-site intermediate. In Yersinia pestis bv. Antiqua (strain Antiqua), this protein is Nucleoside diphosphate kinase.